Here is a 185-residue protein sequence, read N- to C-terminus: ATP-dependent protease subunit HslV (185 aa).

The active site involves T6. The Na(+) site is built by G162, C165, and T168.

It belongs to the peptidase T1B family. HslV subfamily. A double ring-shaped homohexamer of HslV is capped on each side by a ring-shaped HslU homohexamer. The assembly of the HslU/HslV complex is dependent on binding of ATP.

The protein resides in the cytoplasm. It catalyses the reaction ATP-dependent cleavage of peptide bonds with broad specificity.. Allosterically activated by HslU binding. Protease subunit of a proteasome-like degradation complex believed to be a general protein degrading machinery. In Nitratidesulfovibrio vulgaris (strain DSM 19637 / Miyazaki F) (Desulfovibrio vulgaris), this protein is ATP-dependent protease subunit HslV.